A 206-amino-acid polypeptide reads, in one-letter code: Large ribosomal subunit protein uL4 (206 aa).

Residues 46–77 form a disordered region; that stretch reads GTRAQKDREQVRHSTKKPFKQKGTGRARAGMT. Positions 58-70 are enriched in basic residues; the sequence is HSTKKPFKQKGTG.

Belongs to the universal ribosomal protein uL4 family. As to quaternary structure, part of the 50S ribosomal subunit.

Functionally, one of the primary rRNA binding proteins, this protein initially binds near the 5'-end of the 23S rRNA. It is important during the early stages of 50S assembly. It makes multiple contacts with different domains of the 23S rRNA in the assembled 50S subunit and ribosome. In terms of biological role, forms part of the polypeptide exit tunnel. The chain is Large ribosomal subunit protein uL4 from Polaromonas sp. (strain JS666 / ATCC BAA-500).